The sequence spans 398 residues: Cell division protein FtsZ (398 aa).

Residues 24–28, 111–113, Glu154, Arg158, and Asp202 contribute to the GTP site; these read GAGGN and GTG. The disordered stretch occupies residues 333-381; that stretch reads GRNNKSETSPISQSEDSEKEKFKWPYSQSESTQDKTLETKPAEQVSEGA. Residues 364-373 are compositionally biased toward basic and acidic residues; sequence TQDKTLETKP.

Belongs to the FtsZ family. Homodimer. Polymerizes to form a dynamic ring structure in a strictly GTP-dependent manner. Interacts directly with several other division proteins.

It is found in the cytoplasm. Essential cell division protein that forms a contractile ring structure (Z ring) at the future cell division site. The regulation of the ring assembly controls the timing and the location of cell division. One of the functions of the FtsZ ring is to recruit other cell division proteins to the septum to produce a new cell wall between the dividing cells. Binds GTP and shows GTPase activity. In Wolbachia sp, this protein is Cell division protein FtsZ.